Consider the following 310-residue polypeptide: ADP-L-glycero-D-manno-heptose-6-epimerase (310 aa).

Residues 10–11 (FI), 31–32 (DN), Lys-38, Lys-53, 75–79 (EGACS), and Asn-92 each bind NADP(+). Tyr-140 (proton acceptor) is an active-site residue. Lys-144 provides a ligand contact to NADP(+). Asn-169 contributes to the substrate binding site. NADP(+) contacts are provided by Val-170 and Lys-178. The Proton acceptor role is filled by Lys-178. Residues Ser-180, His-187, 201-204 (FEGS), and Arg-209 contribute to the substrate site. An N6-acetyllysine modification is found at Lys-267. Tyr-272 contacts substrate.

This sequence belongs to the NAD(P)-dependent epimerase/dehydratase family. HldD subfamily. As to quaternary structure, homopentamer. It depends on NADP(+) as a cofactor. NAD(+) is required as a cofactor.

It catalyses the reaction ADP-D-glycero-beta-D-manno-heptose = ADP-L-glycero-beta-D-manno-heptose. The protein operates within nucleotide-sugar biosynthesis; ADP-L-glycero-beta-D-manno-heptose biosynthesis; ADP-L-glycero-beta-D-manno-heptose from D-glycero-beta-D-manno-heptose 7-phosphate: step 4/4. Its pathway is bacterial outer membrane biogenesis; LPS core biosynthesis. Completely inhibited by ADP and ADP-glucose, and partially inhibited by ATP and NADH. Catalyzes the interconversion between ADP-D-glycero-beta-D-manno-heptose and ADP-L-glycero-beta-D-manno-heptose via an epimerization at carbon 6 of the heptose. This Escherichia coli (strain K12) protein is ADP-L-glycero-D-manno-heptose-6-epimerase (hldD).